The sequence spans 72 residues: DNA-directed RNA polymerase subunit epsilon (72 aa).

This sequence belongs to the RNA polymerase subunit epsilon family. RNAP is composed of a core of 2 alpha, a beta and a beta' subunit. The core is associated with a delta subunit, and at least one of epsilon or omega. When a sigma factor is associated with the core the holoenzyme is formed, which can initiate transcription.

The enzyme catalyses RNA(n) + a ribonucleoside 5'-triphosphate = RNA(n+1) + diphosphate. A non-essential component of RNA polymerase (RNAP). The polypeptide is DNA-directed RNA polymerase subunit epsilon (Levilactobacillus brevis (strain ATCC 367 / BCRC 12310 / CIP 105137 / JCM 1170 / LMG 11437 / NCIMB 947 / NCTC 947) (Lactobacillus brevis)).